A 68-amino-acid polypeptide reads, in one-letter code: Large ribosomal subunit protein bL35 (68 aa).

This sequence belongs to the bacterial ribosomal protein bL35 family.

The polypeptide is Large ribosomal subunit protein bL35 (Rickettsia canadensis (strain McKiel)).